Here is a 206-residue protein sequence, read N- to C-terminus: Isochorismatase family protein 1A (206 aa).

The protein belongs to the isochorismatase family.

The chain is Isochorismatase family protein 1A from Dictyostelium discoideum (Social amoeba).